The following is a 196-amino-acid chain: uncharacterized protein (196 aa).

The N-terminal stretch at 1-21 (MNGKQCFCFFLFHLFYTGLFA) is a signal peptide. A lipid anchor (N-palmitoyl cysteine) is attached at Cys22. Residue Cys22 is the site of S-diacylglycerol cysteine attachment.

Its subcellular location is the cell membrane. This is an uncharacterized protein from Treponema pallidum (strain Nichols).